A 94-amino-acid polypeptide reads, in one-letter code: Cell division topological specificity factor (94 aa).

This sequence belongs to the MinE family.

Its function is as follows. Prevents the cell division inhibition by proteins MinC and MinD at internal division sites while permitting inhibition at polar sites. This ensures cell division at the proper site by restricting the formation of a division septum at the midpoint of the long axis of the cell. The sequence is that of Cell division topological specificity factor from Acetivibrio thermocellus (strain ATCC 27405 / DSM 1237 / JCM 9322 / NBRC 103400 / NCIMB 10682 / NRRL B-4536 / VPI 7372) (Clostridium thermocellum).